Reading from the N-terminus, the 122-residue chain is Fluoride-specific ion channel FluC 2 (122 aa).

4 helical membrane passes run 4 to 24, 38 to 58, 63 to 83, and 96 to 116; these read VAVWVGVALIGGVGSVLRFVV, LGTLVVNLSGAALLGFLGGLA, AALLAGTAFVGAYTTFSTWML, and AALANIVVSVVLGGAAAFIGQ. Residues glycine 73 and threonine 76 each coordinate Na(+).

This sequence belongs to the fluoride channel Fluc/FEX (TC 1.A.43) family.

It localises to the cell membrane. It catalyses the reaction fluoride(in) = fluoride(out). With respect to regulation, na(+) is not transported, but it plays an essential structural role and its presence is essential for fluoride channel function. Fluoride-specific ion channel. Important for reducing fluoride concentration in the cell, thus reducing its toxicity. The sequence is that of Fluoride-specific ion channel FluC 2 from Mycolicibacterium paratuberculosis (strain ATCC BAA-968 / K-10) (Mycobacterium paratuberculosis).